A 282-amino-acid polypeptide reads, in one-letter code: L-allo-isoleucyltransferase (282 aa).

Cys105 serves as the catalytic Acyl-thioester intermediate. The AB hydrolase-1 domain occupies 169–261 (HTQSTYTPSD…DGQHHDFVDG (93 aa)).

The protein belongs to the AB hydrolase superfamily.

The catalysed reaction is holo-[CmaD peptidyl-carrier protein] + L-alloisoleucyl-[CmaA peptidyl-carrier protein] = L-alloisoleucyl-[CmaD peptidyl-carrier protein] + holo-[CmaA peptidyl-carrier protein]. In terms of biological role, involved in the biosynthesis of the phytotoxin coronatine (COR). Catalyzes the transfer of the aminoacyl group covalently attached to the pantetheinyl arm of CmaA to the holo-pantetheinyl arm of CmaD. During the shuttling process, CmaE generates a covalent-aminoacyl-S-Cys enzyme intermediate by the action of its donor substrate L-aminoacyl-S-CmaA and delivers it to the sulfhydryl group attached to the phosphopantetheinyl arm on CmaD. The sequence is that of L-allo-isoleucyltransferase from Pseudomonas savastanoi pv. glycinea (Pseudomonas syringae pv. glycinea).